We begin with the raw amino-acid sequence, 356 residues long: Phenylalanine--tRNA ligase alpha subunit (356 aa).

Glu258 provides a ligand contact to Mg(2+).

Belongs to the class-II aminoacyl-tRNA synthetase family. Phe-tRNA synthetase alpha subunit type 1 subfamily. In terms of assembly, tetramer of two alpha and two beta subunits. Requires Mg(2+) as cofactor.

Its subcellular location is the cytoplasm. It catalyses the reaction tRNA(Phe) + L-phenylalanine + ATP = L-phenylalanyl-tRNA(Phe) + AMP + diphosphate + H(+). The chain is Phenylalanine--tRNA ligase alpha subunit from Macrococcus caseolyticus (strain JCSC5402) (Macrococcoides caseolyticum).